A 452-amino-acid chain; its full sequence is MSKITKVFAREILDSRGNPTIQVDVYTLAGGFGSAIVPSGASTGSREALELRDTNTKYADNWYGQKGVMTAVDNVNNIIAPEIIGLCCKNQRLIDQKMIELDGTPNKEKLGANAILGVSLAVAKAAANELRMPLFRYLGGTNPTLMPVPMLNVINGGEHASNTLDFQEFMIMPLGFRTFKEALQAANKVFHNLAKLLKKSGFETQVGDEGGFAPNFNSHEQALDFLVDAIKESGFNPGFKGENAVAIAIDAAASEFYNGQKYVFKKLKAASLSKNQADLDEKFEFSSEELLNYYGQLLAKYPIISIEDGFAESDWQGFIAFNQKYGNNHQIVGDDLTVTNVEILKKAINLKAINSILIKLNQIGTLSETLDAIHLAQKSGMTAVISHRSGESEDTTIADLAVAVSSGQIKTGSLSRTDRIAKYNRLLVIEEYLNSYAKADYIGREVFYNLKK.

Position 167 (glutamine 167) interacts with (2R)-2-phosphoglycerate. The active-site Proton donor is the glutamate 209. Aspartate 250, glutamate 307, and aspartate 334 together coordinate Mg(2+). (2R)-2-phosphoglycerate-binding residues include lysine 359, arginine 388, serine 389, and lysine 410. Lysine 359 functions as the Proton acceptor in the catalytic mechanism.

This sequence belongs to the enolase family. Requires Mg(2+) as cofactor.

The protein localises to the cytoplasm. The protein resides in the secreted. It is found in the cell surface. The enzyme catalyses (2R)-2-phosphoglycerate = phosphoenolpyruvate + H2O. It participates in carbohydrate degradation; glycolysis; pyruvate from D-glyceraldehyde 3-phosphate: step 4/5. Its function is as follows. Catalyzes the reversible conversion of 2-phosphoglycerate (2-PG) into phosphoenolpyruvate (PEP). It is essential for the degradation of carbohydrates via glycolysis. This is Enolase from Mesomycoplasma hyopneumoniae (strain 232) (Mycoplasma hyopneumoniae).